A 152-amino-acid polypeptide reads, in one-letter code: Regulator of G-protein signaling 21 (152 aa).

One can recognise an RGS domain in the interval 21 to 137 (NMDTLLANQA…LKSEIYKKLV (117 aa)).

As to expression, expressed ubiquitously.

In terms of biological role, inhibits signal transduction by increasing the GTPase activity of G protein alpha subunits thereby driving them into their inactive GDP-bound form. This chain is Regulator of G-protein signaling 21 (RGS21), found in Homo sapiens (Human).